Consider the following 238-residue polypeptide: LRRN4 C-terminal-like protein (238 aa).

The signal sequence occupies residues 1-22 (MLGSPCLLWLLAVTFLVPRAQP). Residues 23 to 194 (LAPQDFEEEE…RLAVPPNPRT (172 aa)) lie on the Extracellular side of the membrane. One can recognise a Fibronectin type-III domain in the interval 82–176 (PPDPPRMGEV…AGGEGLEGAD (95 aa)). The N-linked (GlcNAc...) asparagine glycan is linked to Asn132. A helical membrane pass occupies residues 195 to 215 (LVHAAVGVGTALALLSCAALV). The Cytoplasmic segment spans residues 216 to 238 (WHFCLRDRWGCPRRAAARAAGAL).

It is found in the membrane. This is LRRN4 C-terminal-like protein (LRRN4CL) from Homo sapiens (Human).